The following is a 276-amino-acid chain: Octanoyltransferase LipM (276 aa).

The 216-residue stretch at Gly-31–Leu-246 folds into the BPL/LPL catalytic domain. Cys-148 functions as the Acyl-thioester intermediate in the catalytic mechanism.

This sequence belongs to the octanoyltransferase LipM family. Monomer.

The enzyme catalyses octanoyl-[ACP] + L-lysyl-[protein] = N(6)-octanoyl-L-lysyl-[protein] + holo-[ACP] + H(+). It functions in the pathway protein modification; protein lipoylation via endogenous pathway; protein N(6)-(lipoyl)lysine from octanoyl-[acyl-carrier-protein]. Catalyzes the transfer of endogenously produced octanoic acid from octanoyl-acyl-carrier-protein onto the lipoyl domain of GcvH, an intermediate carrier during protein lipoylation. The polypeptide is Octanoyltransferase LipM (Halalkalibacterium halodurans (strain ATCC BAA-125 / DSM 18197 / FERM 7344 / JCM 9153 / C-125) (Bacillus halodurans)).